Reading from the N-terminus, the 534-residue chain is High affinity cGMP-specific 3',5'-cyclic phosphodiesterase 9A (534 aa).

In terms of domain architecture, PDEase spans 175–496; that stretch reads PRRDVPTYPK…EHYEELKQLD (322 aa). His251 serves as the catalytic Proton donor. 251–255 contacts 3',5'-cyclic GMP; the sequence is HNFRH. His255, His291, and Asp292 together coordinate Zn(2+). Asp292 is a 3',5'-cyclic GMP binding site. Residue Asp292 coordinates Mg(2+). Residue Ser318 is modified to Phosphoserine. 3',5'-cyclic GMP contacts are provided by residues Asp401, Tyr423, and 451–452; that span reads AQ. Asp401 provides a ligand contact to Zn(2+). Residues 500–534 form a disordered region; sequence KELQKKTESLTSGAPENTTEKNRDAKDSEGHSPPN. The segment covering 517–534 has biased composition (basic and acidic residues); that stretch reads TTEKNRDAKDSEGHSPPN.

This sequence belongs to the cyclic nucleotide phosphodiesterase family. PDE9 subfamily. Homodimer. Zn(2+) serves as cofactor. Requires Mg(2+) as cofactor. As to expression, highly expressed in kidney. Lower levels in liver, lung and brain. Widely expressed in brain, with highest expression in cerebellar Purkinje cells. Present in heart (at protein level).

It is found in the cell projection. It localises to the ruffle membrane. The protein localises to the cytoplasm. Its subcellular location is the perinuclear region. The protein resides in the golgi apparatus. It is found in the endoplasmic reticulum. It localises to the cell membrane. The protein localises to the sarcolemma. The enzyme catalyses 3',5'-cyclic GMP + H2O = GMP + H(+). The protein operates within purine metabolism; 3',5'-cyclic GMP degradation; GMP from 3',5'-cyclic GMP: step 1/1. Its activity is regulated as follows. Inhibited by SCH 51866 and moderately, by zaprinast. Specifically inhibited by PF-04447943 (6-[(3S,4S)-4-methyl-1-(pyrimidin-2-ylmethyl)pyrrolidin-3-yl]-1-(tetrahydro-2H-pyran-4-yl)-1,5-dihydro-4H-pyrazolo[3,4-d]pyrimidin-4-one). Specifically hydrolyzes the second messenger cGMP, which is a key regulator of many important physiological processes. Highly specific: compared to other members of the cyclic nucleotide phosphodiesterase family, has the highest affinity and selectivity for cGMP. Specifically regulates natriuretic-peptide-dependent cGMP signaling in heart, acting as a regulator of cardiac hypertrophy in myocytes and muscle. Does not regulate nitric oxide-dependent cGMP in heart. Additional experiments are required to confirm whether its ability to hydrolyze natriuretic-peptide-dependent cGMP is specific to heart or is a general feature of the protein. In brain, involved in cognitive function, such as learning and long-term memory. This Mus musculus (Mouse) protein is High affinity cGMP-specific 3',5'-cyclic phosphodiesterase 9A (Pde9a).